The primary structure comprises 873 residues: Bifunctional levopimaradiene synthase, chloroplastic (873 aa).

A chloroplast-targeting transit peptide spans 1–59 (MAGVLFANLPCSLQLSPKVPFRQSTNILIPFHKRSSFGFNAQHCVRSHLRLRWNCVGIH). A substrate-binding site is contributed by Lys271. Mg(2+) is bound by residues Asp405 and Asp407. The DXDD motif motif lies at 405–408 (DVDD). Lys492 serves as a coordination point for substrate. Mg(2+)-binding residues include Asp624, Asp628, Asn769, Thr773, and Glu777. The short motif at 624 to 628 (DDLYD) is the DDXXD motif element.

It belongs to the terpene synthase family. Tpsd subfamily. Requires Mg(2+) as cofactor. As to expression, expressed in roots.

Its subcellular location is the plastid. It localises to the chloroplast. The catalysed reaction is (2E,6E,10E)-geranylgeranyl diphosphate = (+)-copalyl diphosphate. It catalyses the reaction (+)-copalyl diphosphate = abieta-8(14),12-diene + diphosphate. It participates in terpene metabolism; ginkgolide biosynthesis. Functionally, catalyzes the initial cyclization step in the biosynthesis of ginkgolides, a structurally unique family of diterpenoids that are highly specific platelet-activating-factor receptor antagonists. Bifunctional enzyme that catalyzes two sequential cyclizations of geranylgeranyl diphosphate (GGPP) to levopimaradiene. This is Bifunctional levopimaradiene synthase, chloroplastic (LPS) from Ginkgo biloba (Ginkgo).